The sequence spans 102 residues: Late embryogenesis abundant protein D-19 (102 aa).

The tract at residues 1–102 (MASEQYQAMR…IDESKFRTKN (102 aa)) is disordered. Over residues 48-58 (EGRHKGGETRK) the composition is skewed to basic and acidic residues.

The protein belongs to the small hydrophilic plant seed protein family.

In terms of biological role, LEA proteins are late embryonic proteins abundant in higher plant seed embryos. There are two subsets of LEA proteins (5a and 5b), the first ones are expressed when the cotyledon weight reach 80 mg and the second set are expressed above 100 mg. The function of those proteins is not known. This Gossypium hirsutum (Upland cotton) protein is Late embryogenesis abundant protein D-19.